The primary structure comprises 377 residues: Succinyl-diaminopimelate desuccinylase (377 aa).

His67 contributes to the Zn(2+) binding site. The active site involves Asp69. Residue Asp100 coordinates Zn(2+). The active-site Proton acceptor is the Glu134. 3 residues coordinate Zn(2+): Glu135, Glu163, and His349.

This sequence belongs to the peptidase M20A family. DapE subfamily. In terms of assembly, homodimer. Zn(2+) serves as cofactor. Co(2+) is required as a cofactor.

It carries out the reaction N-succinyl-(2S,6S)-2,6-diaminopimelate + H2O = (2S,6S)-2,6-diaminopimelate + succinate. The protein operates within amino-acid biosynthesis; L-lysine biosynthesis via DAP pathway; LL-2,6-diaminopimelate from (S)-tetrahydrodipicolinate (succinylase route): step 3/3. Functionally, catalyzes the hydrolysis of N-succinyl-L,L-diaminopimelic acid (SDAP), forming succinate and LL-2,6-diaminopimelate (DAP), an intermediate involved in the bacterial biosynthesis of lysine and meso-diaminopimelic acid, an essential component of bacterial cell walls. The protein is Succinyl-diaminopimelate desuccinylase of Buchnera aphidicola subsp. Baizongia pistaciae (strain Bp).